A 224-amino-acid chain; its full sequence is Envelope glycoprotein L (224 aa).

The N-terminal stretch at 1–22 (MGILGWVGLIAVGVLCVRGGLS) is a signal peptide. Positions 20–161 (GLSSTEYVIR…FDYSRTRRCV (142 aa)) are interaction with gH. Residues 20–161 (GLSSTEYVIR…FDYSRTRRCV (142 aa)) form an interaction with gL region. A gL alphaherpesvirus-type domain is found at 23–201 (STEYVIRSRV…LTTPPPIIAT (179 aa)). Intrachain disulfides connect Cys-44–Cys-76 and Cys-149–Cys-160. Residues 161-224 (VGRQDLGPTN…RRRRPHSRRL (64 aa)) form a disordered region. Asn-170 carries N-linked (GlcNAc...) asparagine; by host glycosylation. Over residues 213–224 (KSRRRRPHSRRL) the composition is skewed to basic residues.

Belongs to the herpesviridae glycoprotein L (gL) family. Alphaherpesvirinae gL subfamily. Interacts with glycoprotein H (gH); this interaction is necessary for the correct processing and cell surface expression of gH. The heterodimer gH/gL seems to interact with gB trimers during fusion. In terms of processing, N-glycosylated, O-glycosylated, and sialylated.

Its subcellular location is the virion membrane. It is found in the host cell membrane. It localises to the host Golgi apparatus. The protein localises to the host trans-Golgi network. In terms of biological role, the heterodimer glycoprotein H-glycoprotein L is required for the fusion of viral and plasma membranes leading to virus entry into the host cell. Acts as a functional inhibitor of gH and maintains gH in an inhibited form. Upon binding to host integrins, gL dissociates from gH leading to activation of the viral fusion glycoproteins gB and gH. The sequence is that of Envelope glycoprotein L from Human herpesvirus 1 (strain KOS) (HHV-1).